The following is a 377-amino-acid chain: tRNA-specific 2-thiouridylase MnmA (377 aa).

ATP-binding positions include 9-16 and L35; that span reads AMSGGVDS. C105 acts as the Nucleophile in catalysis. A disulfide bond links C105 and C201. G129 lines the ATP pocket. An interaction with tRNA region spans residues 151-153; sequence KNQ. C201 (cysteine persulfide intermediate) is an active-site residue. The interaction with tRNA stretch occupies residues 307–308; it reads RY.

Belongs to the MnmA/TRMU family.

It is found in the cytoplasm. It carries out the reaction S-sulfanyl-L-cysteinyl-[protein] + uridine(34) in tRNA + AH2 + ATP = 2-thiouridine(34) in tRNA + L-cysteinyl-[protein] + A + AMP + diphosphate + H(+). Functionally, catalyzes the 2-thiolation of uridine at the wobble position (U34) of tRNA, leading to the formation of s(2)U34. In Leptospira borgpetersenii serovar Hardjo-bovis (strain JB197), this protein is tRNA-specific 2-thiouridylase MnmA.